The sequence spans 447 residues: Kynurenine 3-monooxygenase (447 aa).

This sequence belongs to the aromatic-ring hydroxylase family. KMO subfamily. The cofactor is FAD.

It catalyses the reaction L-kynurenine + NADPH + O2 + H(+) = 3-hydroxy-L-kynurenine + NADP(+) + H2O. It participates in cofactor biosynthesis; NAD(+) biosynthesis; quinolinate from L-kynurenine: step 1/3. Functionally, catalyzes the hydroxylation of L-kynurenine (L-Kyn) to form 3-hydroxy-L-kynurenine (L-3OHKyn). Required for synthesis of quinolinic acid. This is Kynurenine 3-monooxygenase from Flavobacterium psychrophilum (strain ATCC 49511 / DSM 21280 / CIP 103535 / JIP02/86).